A 406-amino-acid chain; its full sequence is Suppressor protein SRP40 (406 aa).

Over residues 1–25 (MASKKIKVDEVPKLSVKEKEIEEKS) the composition is skewed to basic and acidic residues. The segment at 1–335 (MASKKIKVDE…EIKEGQRKHF (335 aa)) is disordered. The span at 26–115 (SSSSSSSSSS…SSSSSSSSDE (90 aa)) shows a compositional bias: low complexity. Positions 125–148 (ETKKRARESDNEDAKETKKAKTEP) are enriched in basic and acidic residues. Phosphoserine is present on Ser133. Low complexity-rich tracts occupy residues 149–168 (ESSS…SESE), 176–186 (DSSSSSSSSSD), 194–233 (DSQS…SSSD), and 243–268 (DSDS…SSDS). The segment covering 283–297 (LETKEATADESKAEE) has biased composition (basic and acidic residues). Phosphothreonine is present on Thr289. At Ser293 the chain carries Phosphoserine. Residues 298–316 (TPASSNESTPSASSSSSAN) show a composition bias toward low complexity. A compositionally biased stretch (basic and acidic residues) spans 325 to 335 (DEIKEGQRKHF). Ser394 is modified (phosphoserine).

In terms of processing, pyrophosphorylated by 5-diphosphoinositol pentakisphosphate (5-IP7). Serine pyrophosphorylation is achieved by Mg(2+)-dependent, but enzyme independent transfer of a beta-phosphate from a inositol pyrophosphate to a pre-phosphorylated serine residue.

Its function is as follows. Not known; weak suppressor of a mutant of the subunit AC40 of DNA dependent RNA polymerase I and III. This is Suppressor protein SRP40 (SRP40) from Saccharomyces cerevisiae (strain ATCC 204508 / S288c) (Baker's yeast).